Consider the following 389-residue polypeptide: Phospho-N-acetylmuramoyl-pentapeptide-transferase (389 aa).

Helical transmembrane passes span 25-45 (RAVM…PWVI), 73-93 (TMGG…WGDL), 97-117 (FIWI…VDDY), 135-155 (FWQS…VSEA), 190-210 (ISYP…IVGA), 222-242 (GLVI…AYVM), 258-278 (GAGE…AFLW), 286-306 (VFMG…VAVI), 311-331 (IVLF…MLQV), and 366-386 (QVVV…LSTL).

This sequence belongs to the glycosyltransferase 4 family. MraY subfamily. It depends on Mg(2+) as a cofactor.

It is found in the cell inner membrane. The catalysed reaction is UDP-N-acetyl-alpha-D-muramoyl-L-alanyl-gamma-D-glutamyl-meso-2,6-diaminopimeloyl-D-alanyl-D-alanine + di-trans,octa-cis-undecaprenyl phosphate = di-trans,octa-cis-undecaprenyl diphospho-N-acetyl-alpha-D-muramoyl-L-alanyl-D-glutamyl-meso-2,6-diaminopimeloyl-D-alanyl-D-alanine + UMP. The protein operates within cell wall biogenesis; peptidoglycan biosynthesis. Its function is as follows. Catalyzes the initial step of the lipid cycle reactions in the biosynthesis of the cell wall peptidoglycan: transfers peptidoglycan precursor phospho-MurNAc-pentapeptide from UDP-MurNAc-pentapeptide onto the lipid carrier undecaprenyl phosphate, yielding undecaprenyl-pyrophosphoryl-MurNAc-pentapeptide, known as lipid I. The protein is Phospho-N-acetylmuramoyl-pentapeptide-transferase of Burkholderia mallei (strain NCTC 10247).